Reading from the N-terminus, the 189-residue chain is Large ribosomal subunit protein bL9 (189 aa).

It belongs to the bacterial ribosomal protein bL9 family.

Its function is as follows. Binds to the 23S rRNA. This is Large ribosomal subunit protein bL9 from Brucella anthropi (strain ATCC 49188 / DSM 6882 / CCUG 24695 / JCM 21032 / LMG 3331 / NBRC 15819 / NCTC 12168 / Alc 37) (Ochrobactrum anthropi).